A 232-amino-acid chain; its full sequence is NAD(P)H-quinone oxidoreductase subunit K 1 (232 aa).

Residues Cys-49, Cys-50, Cys-114, and Cys-145 each contribute to the [4Fe-4S] cluster site.

It belongs to the complex I 20 kDa subunit family. As to quaternary structure, NDH-1 can be composed of about 15 different subunits; different subcomplexes with different compositions have been identified which probably have different functions. The cofactor is [4Fe-4S] cluster.

It localises to the cellular thylakoid membrane. The enzyme catalyses a plastoquinone + NADH + (n+1) H(+)(in) = a plastoquinol + NAD(+) + n H(+)(out). It catalyses the reaction a plastoquinone + NADPH + (n+1) H(+)(in) = a plastoquinol + NADP(+) + n H(+)(out). Functionally, NDH-1 shuttles electrons from an unknown electron donor, via FMN and iron-sulfur (Fe-S) centers, to quinones in the respiratory and/or the photosynthetic chain. The immediate electron acceptor for the enzyme in this species is believed to be plastoquinone. Couples the redox reaction to proton translocation, and thus conserves the redox energy in a proton gradient. Cyanobacterial NDH-1 also plays a role in inorganic carbon-concentration. The protein is NAD(P)H-quinone oxidoreductase subunit K 1 of Acaryochloris marina (strain MBIC 11017).